The sequence spans 306 residues: uncharacterized protein (306 aa).

This is an uncharacterized protein from Saccharomyces cerevisiae (strain ATCC 204508 / S288c) (Baker's yeast).